A 144-amino-acid polypeptide reads, in one-letter code: SVVKSEDFSLSAYVDRRDHPLPEVAHVKHLSASQKALKEKEKASWSSLSMDEKVELYRIKFKESFAEMNRGSNEWKTVVGGAMFFIGFTALIIMWQKRHVYGPLPQSFDKEWVAKQTKRMLDMKVNPIQGLASKWDYEKNEWKK.

At 1-73 the chain is on the mitochondrial matrix side; the sequence is SVVKSEDFSL…SFAEMNRGSN (73 aa). Lys-4 is subject to N6-acetyllysine; alternate. Residue Lys-4 is modified to N6-succinyllysine; alternate. Lys-28 carries the N6-acetyllysine modification. Residues Ser-31 and Ser-33 each carry the phosphoserine modification. Position 35 is an N6-acetyllysine; alternate (Lys-35). Residue Lys-35 is modified to N6-succinyllysine; alternate. Lys-42 carries the post-translational modification N6-acetyllysine. The helical transmembrane segment at 74–99 threads the bilayer; the sequence is EWKTVVGGAMFFIGFTALIIMWQKRH. Over 100-144 the chain is Mitochondrial intermembrane; the sequence is VYGPLPQSFDKEWVAKQTKRMLDMKVNPIQGLASKWDYEKNEWKK.

It belongs to the cytochrome c oxidase IV family. Component of the cytochrome c oxidase (complex IV, CIV), a multisubunit enzyme composed of 14 subunits. The complex is composed of a catalytic core of 3 subunits MT-CO1, MT-CO2 and MT-CO3, encoded in the mitochondrial DNA, and 11 supernumerary subunits COX4I, COX5A, COX5B, COX6A, COX6B, COX6C, COX7A, COX7B, COX7C, COX8 and NDUFA4, which are encoded in the nuclear genome. The complex exists as a monomer or a dimer and forms supercomplexes (SCs) in the inner mitochondrial membrane with NADH-ubiquinone oxidoreductase (complex I, CI) and ubiquinol-cytochrome c oxidoreductase (cytochrome b-c1 complex, complex III, CIII), resulting in different assemblies (supercomplex SCI(1)III(2)IV(1) and megacomplex MCI(2)III(2)IV(2)). Interacts with PHB2; the interaction decreases in absence of SPHK2. Interacts with AFG1L. Interacts with ABCB7; this interaction allows the regulation of cellular iron homeostasis and cellular reactive oxygen species (ROS) levels in cardiomyocytes. Interacts with FLVCR2; this interaction occurs in the absence of heme and is disrupted upon heme binding. Interacts with IRGC.

It is found in the mitochondrion inner membrane. It participates in energy metabolism; oxidative phosphorylation. Component of the cytochrome c oxidase, the last enzyme in the mitochondrial electron transport chain which drives oxidative phosphorylation. The respiratory chain contains 3 multisubunit complexes succinate dehydrogenase (complex II, CII), ubiquinol-cytochrome c oxidoreductase (cytochrome b-c1 complex, complex III, CIII) and cytochrome c oxidase (complex IV, CIV), that cooperate to transfer electrons derived from NADH and succinate to molecular oxygen, creating an electrochemical gradient over the inner membrane that drives transmembrane transport and the ATP synthase. Cytochrome c oxidase is the component of the respiratory chain that catalyzes the reduction of oxygen to water. Electrons originating from reduced cytochrome c in the intermembrane space (IMS) are transferred via the dinuclear copper A center (CU(A)) of subunit 2 and heme A of subunit 1 to the active site in subunit 1, a binuclear center (BNC) formed by heme A3 and copper B (CU(B)). The BNC reduces molecular oxygen to 2 water molecules using 4 electrons from cytochrome c in the IMS and 4 protons from the mitochondrial matrix. This chain is Cytochrome c oxidase subunit 4 isoform 1, mitochondrial (COX4I1), found in Pongo pygmaeus (Bornean orangutan).